A 259-amino-acid chain; its full sequence is Flap endonuclease Xni (259 aa).

Asp-109 serves as a coordination point for Mg(2+). In terms of domain architecture, 5'-3' exonuclease spans 165 to 255 (VTPAQLTDYW…FNLQDIRFNS (91 aa)). K(+) contacts are provided by Leu-176, Pro-185, Val-187, and Ile-190. Residues 189–194 (GIGPKA) are interaction with DNA.

This sequence belongs to the Xni family. Mg(2+) serves as cofactor. K(+) is required as a cofactor.

Has flap endonuclease activity. During DNA replication, flap endonucleases cleave the 5'-overhanging flap structure that is generated by displacement synthesis when DNA polymerase encounters the 5'-end of a downstream Okazaki fragment. This chain is Flap endonuclease Xni, found in Vibrio cholerae serotype O1 (strain ATCC 39315 / El Tor Inaba N16961).